Here is a 192-residue protein sequence, read N- to C-terminus: Cytidylate kinase (192 aa).

7 to 15 (GPPGAGKST) serves as a coordination point for ATP.

It belongs to the cytidylate kinase family. Type 2 subfamily.

Its subcellular location is the cytoplasm. It carries out the reaction CMP + ATP = CDP + ADP. The catalysed reaction is dCMP + ATP = dCDP + ADP. This is Cytidylate kinase from Haloquadratum walsbyi (strain DSM 16790 / HBSQ001).